We begin with the raw amino-acid sequence, 517 residues long: Succinyl-CoA:3-ketoacid coenzyme A transferase 2, mitochondrial (517 aa).

The transit peptide at 1-39 (MAALRLLASVLGRGVPAGGSGLALSQGCARCFATSPRLR) directs the protein to the mitochondrion. The active-site 5-glutamyl coenzyme A thioester intermediate is the Glu-341.

It belongs to the 3-oxoacid CoA-transferase family. Homodimer. In terms of tissue distribution, testis specific.

Its subcellular location is the mitochondrion. It catalyses the reaction a 3-oxo acid + succinyl-CoA = a 3-oxoacyl-CoA + succinate. Its pathway is ketone metabolism; succinyl-CoA degradation; acetoacetyl-CoA from succinyl-CoA: step 1/1. Key enzyme for ketone body catabolism. Transfers the CoA moiety from succinate to acetoacetate. Formation of the enzyme-CoA intermediate proceeds via an unstable anhydride species formed between the carboxylate groups of the enzyme and substrate. This is Succinyl-CoA:3-ketoacid coenzyme A transferase 2, mitochondrial (OXCT2) from Homo sapiens (Human).